The primary structure comprises 185 residues: Lipid A acyltransferase PagP (185 aa).

The signal sequence occupies residues 1-24 (MKTHNDILAALAALPLFLTGAAFA). Catalysis depends on residues His57, Asp100, and Ser101.

The protein belongs to the lipid A palmitoyltransferase family. As to quaternary structure, homodimer.

It is found in the cell outer membrane. It carries out the reaction a lipid A + a 1,2-diacyl-sn-glycero-3-phosphocholine = a hepta-acyl lipid A + a 2-acyl-sn-glycero-3-phosphocholine. It catalyses the reaction a lipid IVA + a 1,2-diacyl-sn-glycero-3-phosphocholine = a lipid IVB + a 2-acyl-sn-glycero-3-phosphocholine. The catalysed reaction is a lipid IIA + a 1,2-diacyl-sn-glycero-3-phosphocholine = a lipid IIB + a 2-acyl-sn-glycero-3-phosphocholine. In terms of biological role, transfers a fatty acid residue from the sn-1 position of a phospholipid to the N-linked hydroxyfatty acid chain on the proximal unit of lipid A or its precursors. The protein is Lipid A acyltransferase PagP of Edwardsiella tarda (strain FL6-60).